A 540-amino-acid polypeptide reads, in one-letter code: Bifunctional purine biosynthesis protein PurH (540 aa).

One can recognise an MGS-like domain in the interval 1–144 (MKRALISVYD…KNYQDVGVVV (144 aa)). The tract at residues 204–224 (ETAPERPIGADPGPQKPAAPS) is disordered.

Belongs to the PurH family.

It carries out the reaction (6R)-10-formyltetrahydrofolate + 5-amino-1-(5-phospho-beta-D-ribosyl)imidazole-4-carboxamide = 5-formamido-1-(5-phospho-D-ribosyl)imidazole-4-carboxamide + (6S)-5,6,7,8-tetrahydrofolate. The enzyme catalyses IMP + H2O = 5-formamido-1-(5-phospho-D-ribosyl)imidazole-4-carboxamide. The protein operates within purine metabolism; IMP biosynthesis via de novo pathway; 5-formamido-1-(5-phospho-D-ribosyl)imidazole-4-carboxamide from 5-amino-1-(5-phospho-D-ribosyl)imidazole-4-carboxamide (10-formyl THF route): step 1/1. It participates in purine metabolism; IMP biosynthesis via de novo pathway; IMP from 5-formamido-1-(5-phospho-D-ribosyl)imidazole-4-carboxamide: step 1/1. This is Bifunctional purine biosynthesis protein PurH from Symbiobacterium thermophilum (strain DSM 24528 / JCM 14929 / IAM 14863 / T).